Here is a 404-residue protein sequence, read N- to C-terminus: MSENILTEPPRSDADNEGYVDRKRHLWILSVLWPATPIIGLYLVSQTGWSIWYGLVLILWYGLVPLIDTMLGEDYSNPPESVVPKLEQDRYYKVLTYLTVPIHYAALIISAWWVSTQPIGVFEFLALALSLGIVNGLALNTGHELGHKKETFDRWMAKLVLAVVGYGHFFIEHNKGHHRDVATPMDPATSRMGESIYTFSLREIPGAFKRAWGLEEQRLSRCGKSVWSLDNEVLQPMILTVVLYAALLAFFGPLMLIFLPIQMAFGWWQLTSANYIEHYGLLREKLPNGRYEHQKPHHSWNSNHVMSNLILFHLQRHSDHHAHPTRSYQSLRDFSDLPTLPTGYPGMFFVAFFPSWFRSLMDDRVMEWAHGDINKIQIQPGMREFYEQKFGVKGSESPDTTVAK.

The next 4 helical transmembrane spans lie at 25 to 45 (HLWI…YLVS), 47 to 67 (TGWS…VPLI), 94 to 114 (VLTY…AWWV), and 119 to 139 (IGVF…GLAL). H143 and H147 together coordinate Fe cation. The chain crosses the membrane as a helical span at residues 151–171 (TFDRWMAKLVLAVVGYGHFFI). The Fe cation site is built by H173, H177, and H178. The chain crosses the membrane as a helical span at residues 241–261 (VVLYAALLAFFGPLMLIFLPI). Fe cation is bound by residues H317, H320, and H321.

This sequence belongs to the fatty acid desaturase type 1 family. AlkB subfamily. The cofactor is Fe(3+).

It is found in the cell inner membrane. The enzyme catalyses octane + 2 reduced [rubredoxin] + O2 + 2 H(+) = 2 oxidized [rubredoxin] + octan-1-ol + H2O. It participates in hydrocarbon metabolism; alkane degradation. Functionally, catalyzes the hydroxylation of n-alkanes and fatty acids in the presence of a NADH-rubredoxin reductase and rubredoxin. It preferably hydroxylases C5-C12 hydrocarbons. This chain is Alkane 1-monooxygenase 1 (alkB1), found in Alcanivorax borkumensis (strain ATCC 700651 / DSM 11573 / NCIMB 13689 / SK2).